Reading from the N-terminus, the 137-residue chain is MGLLSEFKAFAVKGNVVDMAVGIIIGAAFGKIVSSFVGDVIMPPIGLLIGGVDFSDLAITLKAAEGDVPAVVLAYGKFIQTILDFVIVAFAIFMGVKAINRLKREEAVAPSEPPVPSAEETLLTEIRDLLKAQQNKP.

The next 2 helical transmembrane spans lie at 9 to 29 (AFAVKGNVVDMAVGIIIGAAF) and 79 to 99 (IQTILDFVIVAFAIFMGVKAI).

It belongs to the MscL family. As to quaternary structure, homopentamer.

The protein localises to the cell inner membrane. Functionally, channel that opens in response to stretch forces in the membrane lipid bilayer. May participate in the regulation of osmotic pressure changes within the cell. The sequence is that of Large-conductance mechanosensitive channel from Pseudomonas paraeruginosa (strain DSM 24068 / PA7) (Pseudomonas aeruginosa (strain PA7)).